Reading from the N-terminus, the 631-residue chain is 1-deoxy-D-xylulose-5-phosphate synthase (631 aa).

Residues His73 and 114-116 (SHA) each bind thiamine diphosphate. Asp145 contributes to the Mg(2+) binding site. Residues 146-147 (GA), Asn175, Tyr286, and Glu368 each bind thiamine diphosphate. A Mg(2+)-binding site is contributed by Asn175.

It belongs to the transketolase family. DXPS subfamily. As to quaternary structure, homodimer. The cofactor is Mg(2+). Requires thiamine diphosphate as cofactor.

It carries out the reaction D-glyceraldehyde 3-phosphate + pyruvate + H(+) = 1-deoxy-D-xylulose 5-phosphate + CO2. The protein operates within metabolic intermediate biosynthesis; 1-deoxy-D-xylulose 5-phosphate biosynthesis; 1-deoxy-D-xylulose 5-phosphate from D-glyceraldehyde 3-phosphate and pyruvate: step 1/1. In terms of biological role, catalyzes the acyloin condensation reaction between C atoms 2 and 3 of pyruvate and glyceraldehyde 3-phosphate to yield 1-deoxy-D-xylulose-5-phosphate (DXP). The polypeptide is 1-deoxy-D-xylulose-5-phosphate synthase (Nocardia farcinica (strain IFM 10152)).